A 100-amino-acid chain; its full sequence is Urease subunit gamma (100 aa).

It belongs to the urease gamma subunit family. As to quaternary structure, heterotrimer of UreA (gamma), UreB (beta) and UreC (alpha) subunits. Three heterotrimers associate to form the active enzyme.

Its subcellular location is the cytoplasm. The enzyme catalyses urea + 2 H2O + H(+) = hydrogencarbonate + 2 NH4(+). The protein operates within nitrogen metabolism; urea degradation; CO(2) and NH(3) from urea (urease route): step 1/1. This is Urease subunit gamma from Mycobacterium ulcerans (strain Agy99).